We begin with the raw amino-acid sequence, 263 residues long: Rano class II histocompatibility antigen, B-1 beta chain (263 aa).

The signal sequence occupies residues 1 to 27; sequence MALQTPSFLLPAAVVVLMVLSSPGTEG. Residues 28-120 are beta-1; the sequence is RDSPRDFVYQ…SEVRTSLRRL (93 aa). Residues 28–224 are Extracellular-facing; the sequence is RDSPRDFVYQ…RAQSESAQSK (197 aa). 2 disulfide bridges follow: Cys42/Cys104 and Cys143/Cys199. A glycan (N-linked (GlcNAc...) asparagine) is linked at Asn46. Residues 121 to 214 are beta-2; the sequence is EQPNVAISLS…SLESPVTVEW (94 aa). Positions 123–211 constitute an Ig-like C1-type domain; the sequence is PNVAISLSRT…DHPSLESPVT (89 aa). The connecting peptide stretch occupies residues 215 to 224; the sequence is RAQSESAQSK. Residues 225–245 form a helical membrane-spanning segment; the sequence is MLSGIGGFVLGVIFLGLGLFI. Topologically, residues 246–263 are cytoplasmic; it reads RHKRQKGPRGPPPAGLLQ. Lys251 is covalently cross-linked (Glycyl lysine isopeptide (Lys-Gly) (interchain with G-Cter in ubiquitin)).

The protein belongs to the MHC class II family.

It is found in the membrane. Functionally, involved in the presentation of foreign antigens to the immune system. In Rattus norvegicus (Rat), this protein is Rano class II histocompatibility antigen, B-1 beta chain (RT1-Bb).